Consider the following 262-residue polypeptide: MIDKTAFIHPSSIVEEGAIIGAGVYIGPFCIVGSQVEIGAGTELKSHVVVNGITKIGCDNQIYQFASIGEANQDLKYAGEPTRVEVGDRNRIRESVTIHRGTTQGGGVTKVGCDNLLMVNTHVAHDCVIGNRCILANNAALGGHVEIDDYAIIGGMTAIHQFCVIGAHVMVGGCSGITQDVPPFVIAQGNHATPFGINIEGLKRRGFDKESLHAIRSAYKLLYRSGRTLDEVKPEIAELAEQYPVVKAFNDFFARSTRGIIR.

It belongs to the transferase hexapeptide repeat family. LpxA subfamily. Homotrimer.

It is found in the cytoplasm. It catalyses the reaction a (3R)-hydroxyacyl-[ACP] + UDP-N-acetyl-alpha-D-glucosamine = a UDP-3-O-[(3R)-3-hydroxyacyl]-N-acetyl-alpha-D-glucosamine + holo-[ACP]. Its pathway is glycolipid biosynthesis; lipid IV(A) biosynthesis; lipid IV(A) from (3R)-3-hydroxytetradecanoyl-[acyl-carrier-protein] and UDP-N-acetyl-alpha-D-glucosamine: step 1/6. Involved in the biosynthesis of lipid A, a phosphorylated glycolipid that anchors the lipopolysaccharide to the outer membrane of the cell. The polypeptide is Acyl-[acyl-carrier-protein]--UDP-N-acetylglucosamine O-acyltransferase (Yersinia pseudotuberculosis serotype O:1b (strain IP 31758)).